The following is a 555-amino-acid chain: 2-succinyl-5-enolpyruvyl-6-hydroxy-3-cyclohexene-1-carboxylate synthase (555 aa).

The protein belongs to the TPP enzyme family. MenD subfamily. As to quaternary structure, homodimer. Mg(2+) serves as cofactor. Mn(2+) is required as a cofactor. Requires thiamine diphosphate as cofactor.

It catalyses the reaction isochorismate + 2-oxoglutarate + H(+) = 5-enolpyruvoyl-6-hydroxy-2-succinyl-cyclohex-3-ene-1-carboxylate + CO2. The protein operates within quinol/quinone metabolism; 1,4-dihydroxy-2-naphthoate biosynthesis; 1,4-dihydroxy-2-naphthoate from chorismate: step 2/7. It functions in the pathway quinol/quinone metabolism; menaquinone biosynthesis. Catalyzes the thiamine diphosphate-dependent decarboxylation of 2-oxoglutarate and the subsequent addition of the resulting succinic semialdehyde-thiamine pyrophosphate anion to isochorismate to yield 2-succinyl-5-enolpyruvyl-6-hydroxy-3-cyclohexene-1-carboxylate (SEPHCHC). The sequence is that of 2-succinyl-5-enolpyruvyl-6-hydroxy-3-cyclohexene-1-carboxylate synthase from Bacteroides fragilis (strain ATCC 25285 / DSM 2151 / CCUG 4856 / JCM 11019 / LMG 10263 / NCTC 9343 / Onslow / VPI 2553 / EN-2).